The chain runs to 124 residues: Large ribosomal subunit protein bL12 (124 aa).

This sequence belongs to the bacterial ribosomal protein bL12 family. As to quaternary structure, homodimer. Part of the ribosomal stalk of the 50S ribosomal subunit. Forms a multimeric L10(L12)X complex, where L10 forms an elongated spine to which 2 to 4 L12 dimers bind in a sequential fashion. Binds GTP-bound translation factors.

In terms of biological role, forms part of the ribosomal stalk which helps the ribosome interact with GTP-bound translation factors. Is thus essential for accurate translation. The polypeptide is Large ribosomal subunit protein bL12 (Phytoplasma australiense).